The primary structure comprises 528 residues: Endoglucanase 24 (528 aa).

The first 24 residues, methionine 1–alanine 24, serve as a signal peptide directing secretion. Catalysis depends on aspartate 109, which acts as the Nucleophile. Asparagine 259 carries N-linked (GlcNAc...) asparagine glycosylation. The active site involves histidine 446. Asparagine 487 is a glycosylation site (N-linked (GlcNAc...) asparagine). Residues aspartate 492 and glutamate 501 contribute to the active site.

It belongs to the glycosyl hydrolase 9 (cellulase E) family.

It localises to the secreted. It catalyses the reaction Endohydrolysis of (1-&gt;4)-beta-D-glucosidic linkages in cellulose, lichenin and cereal beta-D-glucans.. This chain is Endoglucanase 24, found in Oryza sativa subsp. japonica (Rice).